A 448-amino-acid chain; its full sequence is Phosphoglucosamine mutase (448 aa).

Residue serine 89 is the Phosphoserine intermediate of the active site. Positions 89, 232, 234, and 236 each coordinate Mg(2+). Serine 89 is subject to Phosphoserine.

It belongs to the phosphohexose mutase family. Forms large aggregates. Mg(2+) serves as cofactor. In terms of processing, activated by phosphorylation.

It carries out the reaction alpha-D-glucosamine 1-phosphate = D-glucosamine 6-phosphate. Catalyzes the conversion of glucosamine-6-phosphate to glucosamine-1-phosphate. The protein is Phosphoglucosamine mutase (glmM) of Methanocaldococcus jannaschii (strain ATCC 43067 / DSM 2661 / JAL-1 / JCM 10045 / NBRC 100440) (Methanococcus jannaschii).